The chain runs to 226 residues: 2-C-methyl-D-erythritol 4-phosphate cytidylyltransferase (226 aa).

It belongs to the IspD/TarI cytidylyltransferase family. IspD subfamily.

The enzyme catalyses 2-C-methyl-D-erythritol 4-phosphate + CTP + H(+) = 4-CDP-2-C-methyl-D-erythritol + diphosphate. Its pathway is isoprenoid biosynthesis; isopentenyl diphosphate biosynthesis via DXP pathway; isopentenyl diphosphate from 1-deoxy-D-xylulose 5-phosphate: step 2/6. Functionally, catalyzes the formation of 4-diphosphocytidyl-2-C-methyl-D-erythritol from CTP and 2-C-methyl-D-erythritol 4-phosphate (MEP). The polypeptide is 2-C-methyl-D-erythritol 4-phosphate cytidylyltransferase (Thermosipho africanus (strain TCF52B)).